Consider the following 264-residue polypeptide: Thymidylate synthase (264 aa).

Arg21 contributes to the dUMP binding site. His51 contacts (6R)-5,10-methylene-5,6,7,8-tetrahydrofolate. DUMP is bound at residue 126–127 (RR). Residue Cys146 is the Nucleophile of the active site. Residues 166–169 (RSCD), Asn177, and 207–209 (HLY) each bind dUMP. (6R)-5,10-methylene-5,6,7,8-tetrahydrofolate is bound at residue Asp169. Ser263 contributes to the (6R)-5,10-methylene-5,6,7,8-tetrahydrofolate binding site.

It belongs to the thymidylate synthase family. Bacterial-type ThyA subfamily. In terms of assembly, homodimer.

It localises to the cytoplasm. The catalysed reaction is dUMP + (6R)-5,10-methylene-5,6,7,8-tetrahydrofolate = 7,8-dihydrofolate + dTMP. It functions in the pathway pyrimidine metabolism; dTTP biosynthesis. Catalyzes the reductive methylation of 2'-deoxyuridine-5'-monophosphate (dUMP) to 2'-deoxythymidine-5'-monophosphate (dTMP) while utilizing 5,10-methylenetetrahydrofolate (mTHF) as the methyl donor and reductant in the reaction, yielding dihydrofolate (DHF) as a by-product. This enzymatic reaction provides an intracellular de novo source of dTMP, an essential precursor for DNA biosynthesis. The polypeptide is Thymidylate synthase (Buchnera aphidicola subsp. Acyrthosiphon pisum (strain Tuc7)).